Consider the following 117-residue polypeptide: Fluoride-specific ion channel FluC 2 (117 aa).

Helical transmembrane passes span 1-21 and 46-66; these read MISI…RSAI and FLIG…AFFV. Positions 71 and 74 each coordinate Na(+). The helical transmembrane segment at 95-115 threads the bilayer; sequence LFLNYSLLQFIIGFIACYIGY.

Belongs to the fluoride channel Fluc/FEX (TC 1.A.43) family.

The protein localises to the cell membrane. The enzyme catalyses fluoride(in) = fluoride(out). With respect to regulation, na(+) is not transported, but it plays an essential structural role and its presence is essential for fluoride channel function. In terms of biological role, fluoride-specific ion channel. Important for reducing fluoride concentration in the cell, thus reducing its toxicity. In Staphylococcus aureus (strain Mu50 / ATCC 700699), this protein is Fluoride-specific ion channel FluC 2.